We begin with the raw amino-acid sequence, 449 residues long: MFQTINEISIHPELYNQKKVLIQGWITNIRGNLKIIFVELNDGSSFKNLQCVLKKEFIDFDKIENLALGVAVEISGIFSNTPERQQFGEVLVETLEIKGNNYNTNFPIQNQEISLEVLRQMPHFRHRSRLFRVIMKLRSALFFEIHKFFRRQGFINFSAPILTSNDGEGAGEVFIVDDENKDFFNKKTTLGVTGQLHAEAYALGFKKVYTFAPTFRAERSNTRRHAAEFWMIEPEVAFFTLEQIIELAVKLLQKVIKSVIIRNKDEFIFLEKAGDKNLRKRLLQFCDSQVTQISYEKAIELLLEHQEKFEEKDLFFGCDLKTEHERFLTEEIFHMPVVIINYPKNLKAFYMHQNEDGQTVAAFDLLVPGIGELIGGSQREVRYEKLLARMSELNMNIEEFQWYLDLRKYGNPGSSGFGLGFERLLMYITGIENIRDVIPFPRTSKNILM.

Belongs to the class-II aminoacyl-tRNA synthetase family. In terms of assembly, homodimer.

It is found in the cytoplasm. The enzyme catalyses tRNA(Asn) + L-asparagine + ATP = L-asparaginyl-tRNA(Asn) + AMP + diphosphate + H(+). In Mesomycoplasma hyopneumoniae (strain J / ATCC 25934 / NCTC 10110) (Mycoplasma hyopneumoniae), this protein is Asparagine--tRNA ligase.